Reading from the N-terminus, the 358-residue chain is CCAAT/enhancer-binding protein alpha (358 aa).

Positions 1 to 55 (MESADFYEAEPRPPMSSHLQSPPHAPSNAAFGFPRGAGPAPPPAPPAAPEPLGGI) are disordered. The tract at residues 1–70 (MESADFYEAE…SIDISAYIDP (70 aa)) is required to repress E2F1:TFDP1-mediated transcription, to inhibit cell cycle and to induce adipocyte differentiation. Over residues 29–38 (AAFGFPRGAG) the composition is skewed to low complexity. The span at 39-49 (PAPPPAPPAAP) shows a compositional bias: pro residues. The required for interaction with TRIB1 stretch occupies residues 54–72 (GICEHETSIDISAYIDPAA). Residues 126-200 (PPGYGCAAAG…HASPAHLAAP (75 aa)) form a required to induce adipocyte differentiation region. K159 carries the post-translational modification N6-acetyllysine; alternate. K159 participates in a covalent cross-link: Glycyl lysine isopeptide (Lys-Gly) (interchain with G-Cter in SUMO); alternate. A Glycyl lysine isopeptide (Lys-Gly) (interchain with G-Cter in SUMO2); alternate cross-link involves residue K159. Disordered stretches follow at residues 176-195 (LFPYQPPPPPPPPHPHASPA) and 213-310 (TMHL…NVET). Over residues 179–191 (YQPPPPPPPPHPH) the composition is skewed to pro residues. The interval 180–194 (QPPPPPPPPHPHASP) is required to functionally cooperate with SREBF1 in promoter activation. S193 is subject to Phosphoserine. Pro residues predominate over residues 220–234 (HPTPPPTPVPSPHPA). T222 and T226 each carry phosphothreonine; by GSK3. Position 230 is a phosphoserine; by GSK3 (S230). The interaction with FOXO1 stretch occupies residues 240–358 (AGLPGPGGSL…SLVKAMGNCA (119 aa)). The span at 261-271 (TGGGGGGGAGA) shows a compositional bias: gly residues. A compositionally biased stretch (basic and acidic residues) spans 276–292 (KSVDKNSNEYRVRRERN). The 64-residue stretch at 282–345 (SNEYRVRRER…DTLRGIFRQL (64 aa)) folds into the bZIP domain. A DNA-binding region spans residues 285 to 300 (YRVRRERNNIAVRKSR). The segment at 286–313 (RVRRERNNIAVRKSRDKAKQRNVETQQK) is basic motif. Residues 317-345 (LTSDNDRLRKRVEQLSRELDTLRGIFRQL) are leucine-zipper.

It belongs to the bZIP family. C/EBP subfamily. Binds DNA as a homodimer and as a heterodimer. Can form stable heterodimers with CEBPB, CEBPD, CEBPE and CEBPG. Can form stable homodimers (also isoform 2 and isoform 3 dimers) and heterodimers with CEBPB (with isoform 2 and isoform 3) and CEBPG. Interacts with PRDM16. Interacts with UBN1. Interacts with ZNF638; this interaction increases transcriptional activation. Interacts with the complex TFDP2:E2F1; the interaction prevents CEBPA binding to target gene promoters and represses its transcriptional activity. Interacts with RB1. Interacts (when phosphorylated at Ser-193) with CDK2, CDK4, E2F4 and SMARCA2. Interacts with SREBPF1. Interacts with FOXO1 (via the Fork-head domain); the interaction increases when FOXO1 is deacetylated. Interacts with SIX1. Interacts (via recognition sequence) with TRIB1. As to quaternary structure, interacts with TAF1A and UBTF. In terms of assembly, interacts with NPM1. In terms of processing, sumoylated, sumoylation blocks the inhibitory effect on cell proliferation by disrupting the interaction with SMARCA2. Phosphorylation at Ser-193 is required for interaction with CDK2, CDK4 and SWI/SNF complex leading to cell cycle inhibition. Dephosphorylated at Ser-193 by protein phosphatase 2A (PP2A) through PI3K/AKT signaling pathway regulation. Phosphorylation at Thr-222 and Thr-226 by GSK3 is constitutive in adipose tissue and lung. In liver, both Thr-222 and Thr-226 are phosphorylated only during feeding but not during fasting. Phosphorylation of the GSK3 consensus sites selectively decreases transactivation activity on IRE-controlled promoters. Post-translationally, ubiquitinated by COP1 upon interaction with TRIB1. As to expression, isoform 2 and isoform 3 are expressed in liver (at protein level).

The protein resides in the nucleus. It is found in the nucleolus. Functionally, transcription factor that coordinates proliferation arrest and the differentiation of myeloid progenitors, adipocytes, hepatocytes, and cells of the lung and the placenta. Binds directly to the consensus DNA sequence 5'-T[TG]NNGNAA[TG]-3' acting as an activator on distinct target genes. During early embryogenesis, plays essential and redundant functions with CEBPB. Essential for the transition from common myeloid progenitors (CMP) to granulocyte/monocyte progenitors (GMP). Critical for the proper development of the liver and the lung. Necessary for terminal adipocyte differentiation, is required for postnatal maintenance of systemic energy homeostasis and lipid storage. To regulate these different processes at the proper moment and tissue, interplays with other transcription factors and modulators. Down-regulates the expression of genes that maintain cells in an undifferentiated and proliferative state through E2F1 repression, which is critical for its ability to induce adipocyte and granulocyte terminal differentiation. Reciprocally E2F1 blocks adipocyte differentiation by binding to specific promoters and repressing CEBPA binding to its target gene promoters. Proliferation arrest also depends on a functional binding to SWI/SNF complex. In liver, regulates gluconeogenesis and lipogenesis through different mechanisms. To regulate gluconeogenesis, functionally cooperates with FOXO1 binding to IRE-controlled promoters and regulating the expression of target genes such as PCK1 or G6PC1. To modulate lipogenesis, interacts and transcriptionally synergizes with SREBF1 in promoter activation of specific lipogenic target genes such as ACAS2. In adipose tissue, seems to act as FOXO1 coactivator accessing to ADIPOQ promoter through FOXO1 binding sites. Its function is as follows. Can act as dominant-negative. Binds DNA and have transctivation activity, even if much less efficiently than isoform 2. Does not inhibit cell proliferation. Directly and specifically enhances ribosomal DNA transcription interacting with RNA polymerase I-specific cofactors and inducing histone acetylation. The chain is CCAAT/enhancer-binding protein alpha from Rattus norvegicus (Rat).